The primary structure comprises 475 residues: Pregnancy-specific glycoprotein 22 (475 aa).

The first 35 residues, 1–35, serve as a signal peptide directing secretion; sequence MEVSSELLSNGWTSWQRVLLTASLLTCWLLPITAG. Ig-like V-type domains lie at 44-140, 162-260, and 280-380; these read KLVE…FLQV, PASV…YLQV, and PVPP…QVNV. N-linked (GlcNAc...) asparagine glycosylation is found at Asn103, Asn110, and Asn231. Residues 387 to 471 form the Ig-like C2-type domain; sequence PVMRVTDSTV…SKTSLPVRLT (85 aa). Cys406 and Cys454 are joined by a disulfide.

Belongs to the immunoglobulin superfamily. CEA family.

Its subcellular location is the secreted. May have an angiogenic function during early placental development. Binds to cell-surface heparan sulfate proteoglycans (HSPGs), and stimulates secretion of the proangiogenic factors VEGFA and TGFB from uterine dendritic cells and natural killer cells. Also induces endothelial tube formation in vitro. This Mus musculus (Mouse) protein is Pregnancy-specific glycoprotein 22.